The following is a 184-amino-acid chain: Probable RNA 2'-phosphotransferase (184 aa).

Belongs to the KptA/TPT1 family.

Removes the 2'-phosphate from RNA via an intermediate in which the phosphate is ADP-ribosylated by NAD followed by a presumed transesterification to release the RNA and generate ADP-ribose 1''-2''-cyclic phosphate (APPR&gt;P). May function as an ADP-ribosylase. The protein is Probable RNA 2'-phosphotransferase of Escherichia coli O139:H28 (strain E24377A / ETEC).